We begin with the raw amino-acid sequence, 313 residues long: MEGTWIEVRVITKSEALEPISGIFYGLDCKGVAIEDPNDILGREQGPLTWDFADINILEHKGKVAVVKGYFSEEDNIDDVIAYVKERVEELKESGLDVGEGTVEAEKMFEEDWANNWKKYYKPIKIGEKIVIKPIWEEYEPTGEEMVVELDPGMAFGTGDHETTRMCVQALDKYVKADTTVFDIGTGSGILALVASKLGAKHVLGVDLDPVAVDSAKENISFNNVDNIEVLYGNLLDVVDGKADIVVANIIAEIICILVDDVKKALNKDGIFITSGIIHERRQMVIDKLEQEGFEVMEVNKDGEWNCIVAKLK.

Residues threonine 164, glycine 185, aspartate 207, and asparagine 249 each coordinate S-adenosyl-L-methionine.

The protein belongs to the methyltransferase superfamily. PrmA family.

Its subcellular location is the cytoplasm. It carries out the reaction L-lysyl-[protein] + 3 S-adenosyl-L-methionine = N(6),N(6),N(6)-trimethyl-L-lysyl-[protein] + 3 S-adenosyl-L-homocysteine + 3 H(+). Functionally, methylates ribosomal protein L11. This Clostridium perfringens (strain ATCC 13124 / DSM 756 / JCM 1290 / NCIMB 6125 / NCTC 8237 / Type A) protein is Ribosomal protein L11 methyltransferase.